The primary structure comprises 208 residues: Probable GTP-binding protein EngB (208 aa).

In terms of domain architecture, EngB-type G spans 23 to 205 (LTSEMVILGR…RQTLLKYLLT (183 aa)). GTP-binding positions include 31–38 (GRSNVGKS), 57–61 (GKTRL), 84–87 (DLPG), 154–157 (TKFD), and 182–184 (FNA). 2 residues coordinate Mg(2+): Ser-38 and Thr-59.

It belongs to the TRAFAC class TrmE-Era-EngA-EngB-Septin-like GTPase superfamily. EngB GTPase family. The cofactor is Mg(2+).

Its function is as follows. Necessary for normal cell division and for the maintenance of normal septation. The polypeptide is Probable GTP-binding protein EngB (Helicobacter pylori (strain Shi470)).